We begin with the raw amino-acid sequence, 282 residues long: Tyrosine recombinase XerA (282 aa).

One can recognise a Core-binding (CB) domain in the interval 2-79 (SEPNEVIEEF…ALRAYFRFEG (78 aa)). The Tyr recombinase domain occupies 95-271 (SLPKALTREE…TVEHLRKAQE (177 aa)). Catalysis depends on residues Arg132, Lys157, His223, Arg226, and His249. Catalysis depends on Tyr258, which acts as the O-(3'-phospho-DNA)-tyrosine intermediate.

This sequence belongs to the 'phage' integrase family. XerA subfamily.

The protein resides in the cytoplasm. In terms of biological role, site-specific tyrosine recombinase, which acts by catalyzing the cutting and rejoining of the recombining DNA molecules. The polypeptide is Tyrosine recombinase XerA (Thermococcus kodakarensis (strain ATCC BAA-918 / JCM 12380 / KOD1) (Pyrococcus kodakaraensis (strain KOD1))).